A 158-amino-acid chain; its full sequence is MSEQNNTEMAFQIQRIYTKDISFEAPKAPQVFQQEWQPEVKLDLDTASSQLADDIYEVVLRVTVTASLGEETAFLCEVQQGGIFTVGGIEGTQLAHCLGAYCPNILFPYARECITSLVSRGTFPQLNLAPVNFDALFMNYLQQQTEGEGEGAAQHQDA.

It belongs to the SecB family. Homotetramer, a dimer of dimers. One homotetramer interacts with 1 SecA dimer.

The protein localises to the cytoplasm. In terms of biological role, one of the proteins required for the normal export of preproteins out of the cell cytoplasm. It is a molecular chaperone that binds to a subset of precursor proteins, maintaining them in a translocation-competent state. It also specifically binds to its receptor SecA. The sequence is that of Protein-export protein SecB from Pectobacterium atrosepticum (strain SCRI 1043 / ATCC BAA-672) (Erwinia carotovora subsp. atroseptica).